The chain runs to 463 residues: D-inositol 3-phosphate glycosyltransferase (463 aa).

H40 serves as a coordination point for 1D-myo-inositol 3-phosphate. UDP-N-acetyl-alpha-D-glucosamine-binding positions include 46-47 and G54; that span reads QP. 1D-myo-inositol 3-phosphate contacts are provided by residues 51 to 56, K109, Y142, T166, and R186; that span reads DAGGMN. UDP-N-acetyl-alpha-D-glucosamine-binding residues include R260, K265, and Q318. F327, H328, and V330 together coordinate Mg(2+). Residues E340 and E348 each coordinate UDP-N-acetyl-alpha-D-glucosamine. T354 contacts Mg(2+). The interval 443-463 is disordered; it reads VRDPVAARKPRRWTARRGVGA.

Belongs to the glycosyltransferase group 1 family. MshA subfamily. As to quaternary structure, homodimer.

It catalyses the reaction 1D-myo-inositol 3-phosphate + UDP-N-acetyl-alpha-D-glucosamine = 1D-myo-inositol 2-acetamido-2-deoxy-alpha-D-glucopyranoside 3-phosphate + UDP + H(+). Its function is as follows. Catalyzes the transfer of a N-acetyl-glucosamine moiety to 1D-myo-inositol 3-phosphate to produce 1D-myo-inositol 2-acetamido-2-deoxy-glucopyranoside 3-phosphate in the mycothiol biosynthesis pathway. The polypeptide is D-inositol 3-phosphate glycosyltransferase (Mycobacterium ulcerans (strain Agy99)).